Consider the following 347-residue polypeptide: Quinolinate synthase (347 aa).

Iminosuccinate is bound by residues H47 and S68. [4Fe-4S] cluster is bound at residue C113. Iminosuccinate contacts are provided by residues Y139–N141 and S156. C200 provides a ligand contact to [4Fe-4S] cluster. Residues H226–E228 and T243 contribute to the iminosuccinate site. C297 lines the [4Fe-4S] cluster pocket.

Belongs to the quinolinate synthase family. Type 1 subfamily. It depends on [4Fe-4S] cluster as a cofactor.

The protein localises to the cytoplasm. It carries out the reaction iminosuccinate + dihydroxyacetone phosphate = quinolinate + phosphate + 2 H2O + H(+). The protein operates within cofactor biosynthesis; NAD(+) biosynthesis; quinolinate from iminoaspartate: step 1/1. Functionally, catalyzes the condensation of iminoaspartate with dihydroxyacetone phosphate to form quinolinate. This Escherichia coli O139:H28 (strain E24377A / ETEC) protein is Quinolinate synthase.